Consider the following 397-residue polypeptide: 1-deoxy-D-xylulose 5-phosphate reductoisomerase (397 aa).

NADPH-binding residues include Thr-12, Gly-13, Ser-14, Ile-15, Gly-38, Lys-39, Asn-40, and Asn-126. Residue Lys-127 participates in 1-deoxy-D-xylulose 5-phosphate binding. NADPH is bound at residue Glu-128. Asp-152 contacts Mn(2+). Residues Ser-153, Glu-154, Ser-188, and His-211 each contribute to the 1-deoxy-D-xylulose 5-phosphate site. Residue Glu-154 coordinates Mn(2+). Position 217 (Gly-217) interacts with NADPH. Residues Ser-224, Asn-229, Lys-230, and Glu-233 each coordinate 1-deoxy-D-xylulose 5-phosphate. Glu-233 provides a ligand contact to Mn(2+).

This sequence belongs to the DXR family. The cofactor is Mg(2+). It depends on Mn(2+) as a cofactor.

The enzyme catalyses 2-C-methyl-D-erythritol 4-phosphate + NADP(+) = 1-deoxy-D-xylulose 5-phosphate + NADPH + H(+). The protein operates within isoprenoid biosynthesis; isopentenyl diphosphate biosynthesis via DXP pathway; isopentenyl diphosphate from 1-deoxy-D-xylulose 5-phosphate: step 1/6. In terms of biological role, catalyzes the NADPH-dependent rearrangement and reduction of 1-deoxy-D-xylulose-5-phosphate (DXP) to 2-C-methyl-D-erythritol 4-phosphate (MEP). In Haemophilus influenzae (strain PittEE), this protein is 1-deoxy-D-xylulose 5-phosphate reductoisomerase.